We begin with the raw amino-acid sequence, 241 residues long: Transcription factor HEC1 (241 aa).

The bHLH domain occupies 128 to 177 (ISKDPQSVAARHRRERISERIRILQRLVPGGTKMDTASMLDEAIHYVKFL).

As to quaternary structure, homodimer. Interacts with SPT. Interacts with BZIP30. Flowers, especially in gynoecium.

The protein resides in the nucleus. Its function is as follows. Required for the female reproductive tract development and fertility. The sequence is that of Transcription factor HEC1 (HEC1) from Arabidopsis thaliana (Mouse-ear cress).